Here is a 383-residue protein sequence, read N- to C-terminus: Na(+)/H(+) antiporter NhaA (383 aa).

Transmembrane regions (helical) follow at residues 10 to 30 (LIGGLILFSAALLAIVVNNSP), 56 to 76 (LMHWINDGLMAIYFLYIGLEI), 91 to 111 (IITPAIAAFAGLAMPSLIYLS), 121 to 141 (GWAIPSATDIAFTLGILALLG), 150 to 170 (LLVITIAIFDDIAAIAIIAIF), 174 to 194 (SLSLLSLSLGTLFILAMIICN), 206 to 226 (VVLGFFAWFCTIKSGVHATLA), 254 to 274 (PWIIYFILPVFAFANAGISFS), 275 to 295 (GISFSILFEPITLGIILGLFV), 327 to 347 (GISLLCGIGFTMSLFIGVLAF), and 355 to 375 (AIKIGVVVGSVLSGFFGYIVL).

Belongs to the NhaA Na(+)/H(+) (TC 2.A.33) antiporter family.

The protein localises to the cell inner membrane. It catalyses the reaction Na(+)(in) + 2 H(+)(out) = Na(+)(out) + 2 H(+)(in). Functionally, na(+)/H(+) antiporter that extrudes sodium in exchange for external protons. The polypeptide is Na(+)/H(+) antiporter NhaA (Francisella tularensis subsp. novicida (strain U112)).